The chain runs to 416 residues: RNA polymerase sigma-C factor (416 aa).

The short motif at 205–218 (DLVQEGTLGLERAV) is the Polymerase core binding element. The H-T-H motif DNA-binding region spans 374 to 393 (LAEIGRALDLSRERVRQIES).

It belongs to the sigma-70 factor family.

Functionally, sigma factors are initiation factors that promote the attachment of RNA polymerase to specific initiation sites and are then released. This Nostoc sp. (strain PCC 7120 / SAG 25.82 / UTEX 2576) protein is RNA polymerase sigma-C factor (sigC).